The primary structure comprises 486 residues: Kynureninase 1 (486 aa).

Positions 53–72 are disordered; the sequence is DLKRTTLDPNQEPEHSPTPS. Pyridoxal 5'-phosphate contacts are provided by residues Leu146, Thr147, 174 to 177, Ser231, Asp260, His263, and Tyr285; that span reads FPSD. Lys286 is subject to N6-(pyridoxal phosphate)lysine. Residues Trp326 and Asn354 each coordinate pyridoxal 5'-phosphate.

Belongs to the kynureninase family. As to quaternary structure, homodimer. The cofactor is pyridoxal 5'-phosphate.

It is found in the cytoplasm. The enzyme catalyses L-kynurenine + H2O = anthranilate + L-alanine + H(+). It catalyses the reaction 3-hydroxy-L-kynurenine + H2O = 3-hydroxyanthranilate + L-alanine + H(+). It participates in amino-acid degradation; L-kynurenine degradation; L-alanine and anthranilate from L-kynurenine: step 1/1. It functions in the pathway cofactor biosynthesis; NAD(+) biosynthesis; quinolinate from L-kynurenine: step 2/3. Its function is as follows. Catalyzes the cleavage of L-kynurenine (L-Kyn) and L-3-hydroxykynurenine (L-3OHKyn) into anthranilic acid (AA) and 3-hydroxyanthranilic acid (3-OHAA), respectively. The polypeptide is Kynureninase 1 (bna5-1) (Aspergillus clavatus (strain ATCC 1007 / CBS 513.65 / DSM 816 / NCTC 3887 / NRRL 1 / QM 1276 / 107)).